We begin with the raw amino-acid sequence, 417 residues long: UDP-N-acetylglucosamine 1-carboxyvinyltransferase (417 aa).

Lys-22–Asn-23 is a binding site for phosphoenolpyruvate. Arg-93 provides a ligand contact to UDP-N-acetyl-alpha-D-glucosamine. The active-site Proton donor is Cys-117. Cys-117 carries the 2-(S-cysteinyl)pyruvic acid O-phosphothioketal modification. UDP-N-acetyl-alpha-D-glucosamine is bound by residues Arg-122–Gln-126, Asp-304, and Ile-326.

Belongs to the EPSP synthase family. MurA subfamily.

It localises to the cytoplasm. It carries out the reaction phosphoenolpyruvate + UDP-N-acetyl-alpha-D-glucosamine = UDP-N-acetyl-3-O-(1-carboxyvinyl)-alpha-D-glucosamine + phosphate. The protein operates within cell wall biogenesis; peptidoglycan biosynthesis. In terms of biological role, cell wall formation. Adds enolpyruvyl to UDP-N-acetylglucosamine. The chain is UDP-N-acetylglucosamine 1-carboxyvinyltransferase from Neisseria meningitidis serogroup A / serotype 4A (strain DSM 15465 / Z2491).